A 135-amino-acid polypeptide reads, in one-letter code: MEADRGRNNKVRCAVVDTNVLMYVYLNKADVVGQLREFGFSRFLITASVKRELEKLEMSLRGKEKVAARFALKLLEHFEVVETESEGDPSLIEAAEKYGCILITNDKELKRKAKQRGIPVGYLKEDKRVFVELLD.

A PINc domain is found at 15–118 (VVDTNVLMYV…LKRKAKQRGI (104 aa)). Residues D17 and D88 each contribute to the Mg(2+) site.

The protein belongs to the PINc/VapC protein family. In terms of assembly, dimer. Requires Mg(2+) as cofactor.

Its function is as follows. Toxic component of a type II toxin-antitoxin (TA) system. An RNase. This Archaeoglobus fulgidus (strain ATCC 49558 / DSM 4304 / JCM 9628 / NBRC 100126 / VC-16) protein is Ribonuclease VapC9.